Reading from the N-terminus, the 343-residue chain is Probable fructokinase-7 (343 aa).

Gly-2 is modified (N-acetylglycine).

It belongs to the carbohydrate kinase PfkB family.

The catalysed reaction is D-fructose + ATP = D-fructose 6-phosphate + ADP + H(+). It functions in the pathway glycan biosynthesis; starch biosynthesis. Its function is as follows. May play an important role in maintaining the flux of carbon towards starch formation. The chain is Probable fructokinase-7 from Arabidopsis thaliana (Mouse-ear cress).